The following is a 327-amino-acid chain: Probable cell division protein WhiA (327 aa).

The segment at residues 275–308 is a DNA-binding region (H-T-H motif); that stretch reads SLEELGRLADPQMTKDAVAGRIRRLLTMADKRAE.

Belongs to the WhiA family.

Involved in cell division and chromosome segregation. In Corynebacterium glutamicum (strain R), this protein is Probable cell division protein WhiA.